A 285-amino-acid chain; its full sequence is Pantothenate synthetase (285 aa).

An ATP-binding site is contributed by 30 to 37 (MGNLHDGH). His-37 functions as the Proton donor in the catalytic mechanism. Gln-61 contributes to the (R)-pantoate binding site. Gln-61 is a beta-alanine binding site. 148–151 (GEKD) serves as a coordination point for ATP. Gln-154 contacts (R)-pantoate. 185–188 (RSSR) serves as a coordination point for ATP.

This sequence belongs to the pantothenate synthetase family. In terms of assembly, homodimer.

The protein resides in the cytoplasm. It catalyses the reaction (R)-pantoate + beta-alanine + ATP = (R)-pantothenate + AMP + diphosphate + H(+). The protein operates within cofactor biosynthesis; (R)-pantothenate biosynthesis; (R)-pantothenate from (R)-pantoate and beta-alanine: step 1/1. Its function is as follows. Catalyzes the condensation of pantoate with beta-alanine in an ATP-dependent reaction via a pantoyl-adenylate intermediate. The chain is Pantothenate synthetase from Alcanivorax borkumensis (strain ATCC 700651 / DSM 11573 / NCIMB 13689 / SK2).